Here is a 264-residue protein sequence, read N- to C-terminus: Transmembrane protein 41A (264 aa).

Positions 1–17 are cleaved as a signal peptide; the sequence is MRPLLGLLLVFAGCTFA. Transmembrane regions (helical) follow at residues 67-87, 100-122, 153-173, 175-195, and 219-239; these read AYVF…AIPG, GPWL…CYLL, LFFF…FLNL, APIL…GLIP, and WDTV…GTLI. Residues 96 to 207 form a VTT domain region; the sequence is GALFGPWLGL…FICVQTGSIL (112 aa). An N-linked (GlcNAc...) asparagine glycan is attached at N250.

Belongs to the TMEM41 family.

It localises to the membrane. This is Transmembrane protein 41A (TMEM41A) from Homo sapiens (Human).